The primary structure comprises 204 residues: Outer-membrane lipoprotein carrier protein (204 aa).

A signal peptide spans 1 to 21 (MKKIAIVGALLTSFVASSVWA). A disordered region spans residues 169–204 (QRSSYQLKSQQNGAIDASKFTFTPPQGVTVDDQRNK). The segment covering 171–181 (SSYQLKSQQNG) has biased composition (polar residues).

This sequence belongs to the LolA family. Monomer.

The protein localises to the periplasm. In terms of biological role, participates in the translocation of lipoproteins from the inner membrane to the outer membrane. Only forms a complex with a lipoprotein if the residue after the N-terminal Cys is not an aspartate (The Asp acts as a targeting signal to indicate that the lipoprotein should stay in the inner membrane). The sequence is that of Outer-membrane lipoprotein carrier protein from Enterobacter sp. (strain 638).